We begin with the raw amino-acid sequence, 321 residues long: Methionyl-tRNA formyltransferase (321 aa).

Serine 112–proline 115 lines the (6S)-5,6,7,8-tetrahydrofolate pocket.

This sequence belongs to the Fmt family.

The enzyme catalyses L-methionyl-tRNA(fMet) + (6R)-10-formyltetrahydrofolate = N-formyl-L-methionyl-tRNA(fMet) + (6S)-5,6,7,8-tetrahydrofolate + H(+). In terms of biological role, attaches a formyl group to the free amino group of methionyl-tRNA(fMet). The formyl group appears to play a dual role in the initiator identity of N-formylmethionyl-tRNA by promoting its recognition by IF2 and preventing the misappropriation of this tRNA by the elongation apparatus. The chain is Methionyl-tRNA formyltransferase from Shewanella pealeana (strain ATCC 700345 / ANG-SQ1).